The primary structure comprises 112 residues: uncharacterized protein (112 aa).

Residues 1 to 27 (MIASIGDSAEPPLRRTRRAQQQDRPPT) are disordered.

This is an uncharacterized protein from Orgyia pseudotsugata multicapsid polyhedrosis virus (OpMNPV).